The following is a 104-amino-acid chain: N(4)-acetylcytidine amidohydrolase (104 aa).

Residues 7–93 (MTFFSRFEAD…EVIQEIYPGI (87 aa)) enclose the ASCH domain. Catalysis depends on lysine 22, which acts as the Proton acceptor. Threonine 25 serves as the catalytic Nucleophile. Glutamate 75 acts as the Proton donor in catalysis.

Belongs to the N(4)-acetylcytidine amidohydrolase family.

It catalyses the reaction N(4)-acetylcytidine + H2O = cytidine + acetate + H(+). It carries out the reaction N(4)-acetyl-2'-deoxycytidine + H2O = 2'-deoxycytidine + acetate + H(+). The catalysed reaction is N(4)-acetylcytosine + H2O = cytosine + acetate + H(+). Functionally, catalyzes the hydrolysis of N(4)-acetylcytidine (ac4C). The chain is N(4)-acetylcytidine amidohydrolase from Vibrio vulnificus (strain YJ016).